Reading from the N-terminus, the 287-residue chain is MLAMTKAKAFCQLARFDRPIGSLLLLWPTLWALFLAADGLPNMHVLVVFVLGVVFMRAAGCVINDFADRNFDGHVKRTAKRPMPSGKISEREALGLFGLLVLVSFVLVLTMNTLTIMLSVVGLVLAAAYPFMKRYTHLPQLVLGMAFGWSIPMAYAAQAGELPVVAWLLFTANILWTIAYDTQYAMVDRDDDLKVGIKSAAILFGRFDKIIIGVLQLSTLVTMILIGHSLDLHQIYYWFLLMASGLFVYQQRLIGSREREPCFKAFLNNNYVGMLIFLGIAISVMMQ.

Transmembrane regions (helical) follow at residues 20–40, 43–63, 94–114, 115–135, 137–157, 159–179, 210–230, 235–255, and 266–286; these read IGSL…ADGL, MHVL…GCVI, LGLF…MNTL, TIML…MKRY, HLPQ…AYAA, AGEL…WTIA, IIIG…GHSL, IYYW…RLIG, and FLNN…SVMM.

It belongs to the UbiA prenyltransferase family. The cofactor is Mg(2+).

Its subcellular location is the cell inner membrane. The enzyme catalyses all-trans-octaprenyl diphosphate + 4-hydroxybenzoate = 4-hydroxy-3-(all-trans-octaprenyl)benzoate + diphosphate. Its pathway is cofactor biosynthesis; ubiquinone biosynthesis. Functionally, catalyzes the prenylation of para-hydroxybenzoate (PHB) with an all-trans polyprenyl group. Mediates the second step in the final reaction sequence of ubiquinone-8 (UQ-8) biosynthesis, which is the condensation of the polyisoprenoid side chain with PHB, generating the first membrane-bound Q intermediate 3-octaprenyl-4-hydroxybenzoate. This Photobacterium profundum (strain SS9) protein is 4-hydroxybenzoate octaprenyltransferase.